The sequence spans 250 residues: tRNA (guanine-N(1)-)-methyltransferase (250 aa).

S-adenosyl-L-methionine is bound by residues Gly116 and 136–141 (IGDYVL).

Belongs to the RNA methyltransferase TrmD family. As to quaternary structure, homodimer.

The protein resides in the cytoplasm. It carries out the reaction guanosine(37) in tRNA + S-adenosyl-L-methionine = N(1)-methylguanosine(37) in tRNA + S-adenosyl-L-homocysteine + H(+). In terms of biological role, specifically methylates guanosine-37 in various tRNAs. The chain is tRNA (guanine-N(1)-)-methyltransferase from Pseudomonas putida (strain W619).